The following is a 509-amino-acid chain: Protein root UVB sensitive 5 (509 aa).

A disordered region spans residues 22–49 (CQPKRRRVEHLRCSAQPSSIREDDEDAD).

The protein belongs to the RUS1 family.

The sequence is that of Protein root UVB sensitive 5 from Arabidopsis thaliana (Mouse-ear cress).